The primary structure comprises 146 residues: MLTFQFLFRASPATLLLTLYLQLGVITAQEDTRRTIILSTELPQEVTANELTTLKLKVETELRECMVIKAYLVSSKPLAGPFNYKYTGCLCSDYPRTFYWDFQTNSTVRIATVVDIIRELNICPDDQAVVPIKSNRYYAITDLTVN.

Positions 1-28 (MLTFQFLFRASPATLLLTLYLQLGVITA) are cleaved as a signal peptide. Pyrrolidone carboxylic acid is present on glutamine 29. Disulfide bonds link cysteine 65–cysteine 91 and cysteine 89–cysteine 123. Asparagine 105 carries an N-linked (GlcNAc...) asparagine glycan.

This sequence belongs to the PIP family. As to quaternary structure, monomer. Interacts with AZGP1.

It localises to the secreted. The chain is Prolactin-inducible protein homolog (PIP) from Cavia porcellus (Guinea pig).